A 243-amino-acid polypeptide reads, in one-letter code: uncharacterized protein (243 aa).

This is an uncharacterized protein from Orgyia pseudotsugata multicapsid polyhedrosis virus (OpMNPV).